Here is a 175-residue protein sequence, read N- to C-terminus: NADH-quinone oxidoreductase subunit I (175 aa).

2 consecutive 4Fe-4S ferredoxin-type domains span residues 44–74 and 90–119; these read LNRYADGLEKCIGCELCAWACPADAIFVEGA and RVYQINYLRCIGCGLCIEACPTRALTMTND. 8 residues coordinate [4Fe-4S] cluster: Cys-54, Cys-57, Cys-60, Cys-64, Cys-99, Cys-102, Cys-105, and Cys-109. Residues 148 to 175 form a disordered region; sequence PPHAMAPGATDEDYYRGTVSPSAEADAR.

The protein belongs to the complex I 23 kDa subunit family. In terms of assembly, NDH-1 is composed of 14 different subunits. Subunits NuoA, H, J, K, L, M, N constitute the membrane sector of the complex. It depends on [4Fe-4S] cluster as a cofactor.

It localises to the cell membrane. The catalysed reaction is a quinone + NADH + 5 H(+)(in) = a quinol + NAD(+) + 4 H(+)(out). Its function is as follows. NDH-1 shuttles electrons from NADH, via FMN and iron-sulfur (Fe-S) centers, to quinones in the respiratory chain. The immediate electron acceptor for the enzyme in this species is believed to be menaquinone. Couples the redox reaction to proton translocation (for every two electrons transferred, four hydrogen ions are translocated across the cytoplasmic membrane), and thus conserves the redox energy in a proton gradient. The sequence is that of NADH-quinone oxidoreductase subunit I from Mycolicibacterium gilvum (strain PYR-GCK) (Mycobacterium gilvum (strain PYR-GCK)).